Here is a 1705-residue protein sequence, read N- to C-terminus: Protein TIC 214 (1705 aa).

5 consecutive transmembrane segments (helical) span residues 18–38 (IINSVVVVGLYYGFLTTFSIG), 67–87 (FITGQLIMFISIYYAPLHLAL), 127–147 (LSIQCVFLNNLIFQLLNHFIL), 175–195 (VGWIIGHILFMKWVGLLLVWI), and 218–238 (SMSMAGIFSIFLLVTCVHYLG).

It belongs to the TIC214 family. Part of the Tic complex.

It localises to the plastid. The protein localises to the chloroplast inner membrane. In terms of biological role, involved in protein precursor import into chloroplasts. May be part of an intermediate translocation complex acting as a protein-conducting channel at the inner envelope. The polypeptide is Protein TIC 214 (Helianthus annuus (Common sunflower)).